Reading from the N-terminus, the 268-residue chain is E3 ubiquitin-protein ligase IAP-3 (268 aa).

2 BIR repeats span residues 18-84 (KAAR…CPFV) and 111-178 (EAAR…CEYV). Zn(2+) contacts are provided by cysteine 148, cysteine 151, histidine 168, and cysteine 175. The RING-type zinc finger occupies 221-256 (CKICLGAEKTVCFVPCGHVVACGKCAAGVTTCPVCR).

The protein belongs to the IAP family. In terms of processing, auto-ubiquitinated.

It carries out the reaction S-ubiquitinyl-[E2 ubiquitin-conjugating enzyme]-L-cysteine + [acceptor protein]-L-lysine = [E2 ubiquitin-conjugating enzyme]-L-cysteine + N(6)-ubiquitinyl-[acceptor protein]-L-lysine.. RING-finger E3 ubiquitin ligase required to prevent cellular apoptosis in infected cells. Ubiquitinates and subsequently targets host pro-apoptotic cellular proteins such as HID for degradation by the proteasome. The polypeptide is E3 ubiquitin-protein ligase IAP-3 (IAP3) (Orgyia pseudotsugata multicapsid polyhedrosis virus (OpMNPV)).